The primary structure comprises 263 residues: Type III pantothenate kinase (263 aa).

6–13 serves as a coordination point for ATP; it reads DVGNTRIK. Substrate is bound by residues tyrosine 92 and 99 to 102; that span reads GTDR. Aspartate 101 functions as the Proton acceptor in the catalytic mechanism. Residue threonine 124 participates in ATP binding. Threonine 174 contributes to the substrate binding site.

This sequence belongs to the type III pantothenate kinase family. As to quaternary structure, homodimer. The cofactor is NH4(+). It depends on K(+) as a cofactor.

The protein resides in the cytoplasm. The catalysed reaction is (R)-pantothenate + ATP = (R)-4'-phosphopantothenate + ADP + H(+). Its pathway is cofactor biosynthesis; coenzyme A biosynthesis; CoA from (R)-pantothenate: step 1/5. Catalyzes the phosphorylation of pantothenate (Pan), the first step in CoA biosynthesis. The polypeptide is Type III pantothenate kinase (Azoarcus sp. (strain BH72)).